Reading from the N-terminus, the 102-residue chain is Small ribosomal subunit protein uS10 (102 aa).

This sequence belongs to the universal ribosomal protein uS10 family. As to quaternary structure, part of the 30S ribosomal subunit.

In terms of biological role, involved in the binding of tRNA to the ribosomes. The sequence is that of Small ribosomal subunit protein uS10 from Micrococcus luteus (strain ATCC 4698 / DSM 20030 / JCM 1464 / CCM 169 / CCUG 5858 / IAM 1056 / NBRC 3333 / NCIMB 9278 / NCTC 2665 / VKM Ac-2230) (Micrococcus lysodeikticus).